A 309-amino-acid polypeptide reads, in one-letter code: Ribonuclease Z (309 aa).

Positions 61, 63, 65, 66, 144, 212, and 271 each coordinate Zn(2+). Aspartate 65 serves as the catalytic Proton acceptor.

This sequence belongs to the RNase Z family. As to quaternary structure, homodimer. It depends on Zn(2+) as a cofactor.

The enzyme catalyses Endonucleolytic cleavage of RNA, removing extra 3' nucleotides from tRNA precursor, generating 3' termini of tRNAs. A 3'-hydroxy group is left at the tRNA terminus and a 5'-phosphoryl group is left at the trailer molecule.. In terms of biological role, zinc phosphodiesterase, which displays some tRNA 3'-processing endonuclease activity. Probably involved in tRNA maturation, by removing a 3'-trailer from precursor tRNA. The sequence is that of Ribonuclease Z from Clostridium acetobutylicum (strain ATCC 824 / DSM 792 / JCM 1419 / IAM 19013 / LMG 5710 / NBRC 13948 / NRRL B-527 / VKM B-1787 / 2291 / W).